A 157-amino-acid chain; its full sequence is 3-dehydroquinate dehydratase (157 aa).

The active-site Proton acceptor is the tyrosine 24. Substrate-binding residues include asparagine 75, histidine 81, and aspartate 88. The active-site Proton donor is the histidine 101. Substrate contacts are provided by residues 102-103 and arginine 112; that span reads LS.

The protein belongs to the type-II 3-dehydroquinase family. As to quaternary structure, homododecamer.

The enzyme catalyses 3-dehydroquinate = 3-dehydroshikimate + H2O. Its pathway is metabolic intermediate biosynthesis; chorismate biosynthesis; chorismate from D-erythrose 4-phosphate and phosphoenolpyruvate: step 3/7. Catalyzes a trans-dehydration via an enolate intermediate. This Brucella melitensis biotype 1 (strain ATCC 23456 / CCUG 17765 / NCTC 10094 / 16M) protein is 3-dehydroquinate dehydratase.